We begin with the raw amino-acid sequence, 152 residues long: Transcriptional repressor NrdR (152 aa).

A zinc finger spans residues 3–34 (CPFCNAADSKVIDSRLAAEGCQIRRRRECVSC). The ATP-cone domain occupies 49 to 139 (PRVIKSNGKN…VYQDFQDVEA (91 aa)).

It belongs to the NrdR family. It depends on Zn(2+) as a cofactor.

Functionally, negatively regulates transcription of bacterial ribonucleotide reductase nrd genes and operons by binding to NrdR-boxes. This Acinetobacter baumannii (strain AB0057) protein is Transcriptional repressor NrdR.